We begin with the raw amino-acid sequence, 495 residues long: UDP-glycosyltransferase 73C25 (495 aa).

Residue 23-26 (GHMI) coordinates UDP-alpha-D-glucose. His24 serves as the catalytic Proton acceptor. Asp129 functions as the Charge relay in the catalytic mechanism. UDP-alpha-D-glucose is bound by residues 355-358 (WSPQ), 373-381 (HCGWNSTLE), and 397-398 (DQ).

The protein belongs to the UDP-glycosyltransferase family.

Catalyzes the transfer of a glucose (Glc) moiety from UDP-Glc to the C-28 carboxylic group of oleanolate 3-O-beta-D-glucoside to form oleanolate 3,28-O-beta-D-diglucoside. The protein is UDP-glycosyltransferase 73C25 of Barbarea vulgaris (Yellow rocket).